Reading from the N-terminus, the 39-residue chain is Bacteriocin E50-52 (39 aa).

Its subcellular location is the secreted. In terms of biological role, bacteriocin active against the Gram-negative bacteria C.jejuni, Y.enterocolitica and Y.pseudotuberculosis, and the Gram-positive bacteria S.aureus, S.epidermidis, L.monocytogenes and Listeria spp. When added to the drinking water of chickens, causes a decrease in the levels of C.jejuni and S.enteritidis in the ceca, and in the levels of S.enteritidis in the liver and spleen. The sequence is that of Bacteriocin E50-52 from Enterococcus faecium (Streptococcus faecium).